The sequence spans 420 residues: UDP-glucuronic acid decarboxylase 1 (420 aa).

At methionine 1 the chain carries N-acetylmethionine. Topologically, residues 1–19 (MVSKALLRLVSAVNRRRMK) are cytoplasmic. A helical; Signal-anchor for type II membrane protein transmembrane segment spans residues 20-40 (LLLGIALLAYVASVWGNFVNM). The Lumenal portion of the chain corresponds to 41–420 (RSIQENGELK…RIKKGRTRHS (380 aa)). Threonine 94 is subject to Phosphothreonine. NAD(+) is bound by residues glycine 98, phenylalanine 99, valine 100, aspartate 119, asparagine 120, phenylalanine 122, threonine 123, glycine 124, aspartate 144, and valine 145. UDP-alpha-D-glucuronate-binding residues include leucine 149 and tyrosine 150. Residues leucine 159 and serine 161 each contribute to the NAD(+) site. Lysine 177 is a UDP-alpha-D-glucuronate binding site. Threonine 178 contributes to the NAD(+) binding site. Residues asparagine 185, glycine 188, lysine 191, and arginine 192 each coordinate UDP-alpha-D-glucuronate. The NAD(+) site is built by alanine 200, tyrosine 231, and lysine 235. Tyrosine 231 functions as the Proton acceptor in the catalytic mechanism. Residues tyrosine 245, glutamine 248, and glutamate 249 each coordinate UDP-alpha-D-glucuronate. NAD(+) is bound by residues threonine 261, histidine 267, and arginine 272. Residue asparagine 316 is glycosylated (N-linked (GlcNAc...) asparagine).

It belongs to the NAD(P)-dependent epimerase/dehydratase family. UDP-glucuronic acid decarboxylase subfamily. In terms of assembly, homodimer and homotetramer. Interacts with AKT1. It depends on NAD(+) as a cofactor.

It localises to the golgi apparatus. The protein resides in the golgi stack membrane. It catalyses the reaction UDP-alpha-D-glucuronate + H(+) = UDP-alpha-D-xylose + CO2. The protein operates within nucleotide-sugar biosynthesis; UDP-alpha-D-xylose biosynthesis; UDP-alpha-D-xylose from UDP-alpha-D-glucuronate: step 1/1. In terms of biological role, catalyzes the NAD-dependent decarboxylation of UDP-glucuronic acid to UDP-xylose. Necessary for the biosynthesis of the core tetrasaccharide in glycosaminoglycan biosynthesis. The sequence is that of UDP-glucuronic acid decarboxylase 1 from Homo sapiens (Human).